The sequence spans 244 residues: tRNA pseudouridine synthase A (244 aa).

Asp52 acts as the Nucleophile in catalysis. Tyr110 is a substrate binding site.

It belongs to the tRNA pseudouridine synthase TruA family. Homodimer.

It carries out the reaction uridine(38/39/40) in tRNA = pseudouridine(38/39/40) in tRNA. Functionally, formation of pseudouridine at positions 38, 39 and 40 in the anticodon stem and loop of transfer RNAs. This is tRNA pseudouridine synthase A from Clostridium botulinum (strain Alaska E43 / Type E3).